We begin with the raw amino-acid sequence, 93 residues long: Ferredoxin-2 (93 aa).

The 2Fe-2S ferredoxin-type domain maps to 2-91; it reads YKVTLKTPDG…DVVIETHKED (90 aa). Residues Cys-37, Cys-42, Cys-45, and Cys-75 each contribute to the [2Fe-2S] cluster site.

Belongs to the 2Fe2S plant-type ferredoxin family. It depends on [2Fe-2S] cluster as a cofactor.

Its subcellular location is the plastid. It localises to the chloroplast. In terms of biological role, ferredoxins are iron-sulfur proteins that transfer electrons in a wide variety of metabolic reactions. The sequence is that of Ferredoxin-2 from Equisetum arvense (Field horsetail).